The primary structure comprises 459 residues: GTPase Der (459 aa).

EngA-type G domains follow at residues 4 to 169 and 179 to 355; these read PLVA…PEVT and IAVS…AAHR. Residues 10–17, 57–61, 120–123, 185–192, 232–236, and 297–300 each bind GTP; these read GRPNVGKS, DTGGL, NKCE, DTAGI, and NKWD. Residues 356 to 441 form the KH-like domain; sequence KRVPTAVVNE…PIRFLWRGKS (86 aa).

It belongs to the TRAFAC class TrmE-Era-EngA-EngB-Septin-like GTPase superfamily. EngA (Der) GTPase family. As to quaternary structure, associates with the 50S ribosomal subunit.

In terms of biological role, GTPase that plays an essential role in the late steps of ribosome biogenesis. This chain is GTPase Der, found in Synechococcus sp. (strain JA-2-3B'a(2-13)) (Cyanobacteria bacterium Yellowstone B-Prime).